Reading from the N-terminus, the 339-residue chain is Annexin A2 (339 aa).

S2 bears the N-acetylserine mark. Positions 2–24 (STVHEILCKLSLEGDHSTPPSAY) are S100A10-binding site. Y24 carries the post-translational modification Phosphotyrosine; by SRC. S26 carries the post-translational modification Phosphoserine; by PKC. 2 Annexin repeats span residues 33–104 (FDAE…GLLK) and 105–176 (TPAQ…ALAK). At K49 the chain carries N6-acetyllysine; alternate. Residue K49 forms a Glycyl lysine isopeptide (Lys-Gly) (interchain with G-Cter in SUMO1); alternate linkage. Residue K49 forms a Glycyl lysine isopeptide (Lys-Gly) (interchain with G-Cter in SUMO2); alternate linkage. An N6-acetyllysine modification is found at K152. Position 184 is a phosphoserine (S184). Annexin repeat units lie at residues 189 to 261 (ELID…NLVQ) and 265 to 336 (NKPL…YLCG). Y199 carries the phosphotyrosine modification. An N6-acetyllysine modification is found at K227.

This sequence belongs to the annexin family. Heterotetramer containing 2 light chains of S100A10/p11 and 2 heavy chains of ANXA2/p36. Interacts with ATP1B1. Interacts with DYSF. Interacts with COCH. Interacts (via repeat Annexin 1) with PCSK9 (via the C-terminal domain); the interaction inhibits the degradation of LDLR. Interacts with CEACAM1 (via the cytoplasmic domain); this interaction is regulated by phosphorylation of CEACAM1. Interacts with APPL2 and APPL1; targets APPL2 to endosomes and acting in parallel to RAB5A. Interacts with S100A4. May interact with UBAP2. Interacts with PLEKHG4B; this interaction is required for PLEKHG4B localization to cell-cell adhesions. In terms of assembly, (Microbial infection) Interacts with human cytomegalovirus (HCMV). As to quaternary structure, (Microbial infection) Interacts with M.pneumoniae CARDS toxin; CARDS probably uses this protein as a receptor. A portion of internalized CARDS remains associated with intracellular annexin 2. Phosphorylation of Tyr-24 enhances heat stress-induced translocation to the cell surface. Post-translationally, ISGylated.

The protein resides in the secreted. The protein localises to the extracellular space. It is found in the extracellular matrix. Its subcellular location is the basement membrane. It localises to the melanosome. Calcium-regulated membrane-binding protein whose affinity for calcium is greatly enhanced by anionic phospholipids. It binds two calcium ions with high affinity. May be involved in heat-stress response. Inhibits PCSK9-enhanced LDLR degradation, probably reduces PCSK9 protein levels via a translational mechanism but also competes with LDLR for binding with PCSK9. Binds to endosomes damaged by phagocytosis of particulate wear debris and participates in endosomal membrane stabilization, thereby limiting NLRP3 inflammasome activation. Required for endothelial cell surface plasmin generation and may support fibrinolytic surveillance and neoangiogenesis. Functionally, (Microbial infection) Binds M.pneumoniae CARDS toxin, probably serves as one receptor for this pathogen. When ANXA2 is down-regulated by siRNA, less toxin binds to human cells and less vacuolization (a symptom of M.pneumoniae infection) is seen. The polypeptide is Annexin A2 (ANXA2) (Homo sapiens (Human)).